The chain runs to 342 residues: Photosystem II D2 protein (342 aa).

Over 1-29 (ERGWFDILDDWLKRDRFVFVGWSGILLFP) the chain is Cytoplasmic. The chain crosses the membrane as a helical span at residues 30 to 50 (CAYLALGGWLTGTTFVTSWYT). Residues 51 to 113 (HGLASSYLEG…IALHGAFGLI (63 aa)) are Lumenal-facing. His-107 is a binding site for chlorophyll a. The chain crosses the membrane as a helical span at residues 114-130 (GFMLRQFEIARLVGVRP). Pheophytin a-binding residues include Gln-119 and Asn-132. At 131-141 (YNAIAFSAPIA) the chain is on the cytoplasmic side. Residues 142–155 (VFVSVFLIYPLGQS) form a helical membrane-spanning segment. Over 156-196 (SWFFAPSFGVAAIFRFLLFFQGFHNWTLNPFHMMGVAGVLG) the chain is Lumenal. His-187 serves as a coordination point for chlorophyll a. The chain crosses the membrane as a helical span at residues 197-217 (GALLCAIHGATVENTLFQDGE). The a plastoquinone site is built by His-204 and Phe-251. His-204 provides a ligand contact to Fe cation. Residues 218–267 (GASTFRAFNPTQAEETYSMVTANRFWSQIFGIAFSNKRWLHFFMLFVPVT) lie on the Cytoplasmic side of the membrane. A Fe cation-binding site is contributed by His-258. A helical membrane pass occupies residues 268-284 (GLWMSAIGVVGLALNLR). Over 285 to 342 (SYDFISQEIRAAEDPEFETFYTKNLLLNEGIRAWMAPQDQPHENFVFPEEVLPRGNAL) the chain is Lumenal.

Belongs to the reaction center PufL/M/PsbA/D family. PSII is composed of 1 copy each of membrane proteins PsbA, PsbB, PsbC, PsbD, PsbE, PsbF, PsbH, PsbI, PsbJ, PsbK, PsbL, PsbM, PsbT, PsbX, PsbY, PsbZ, Psb30/Ycf12, peripheral proteins PsbO, CyanoQ (PsbQ), PsbU, PsbV and a large number of cofactors. It forms dimeric complexes. The D1/D2 heterodimer binds P680, chlorophylls that are the primary electron donor of PSII, and subsequent electron acceptors. It shares a non-heme iron and each subunit binds pheophytin, quinone, additional chlorophylls, carotenoids and lipids. There is also a Cl(-1) ion associated with D1 and D2, which is required for oxygen evolution. The PSII complex binds additional chlorophylls, carotenoids and specific lipids. serves as cofactor.

It localises to the cellular thylakoid membrane. The catalysed reaction is 2 a plastoquinone + 4 hnu + 2 H2O = 2 a plastoquinol + O2. Photosystem II (PSII) is a light-driven water:plastoquinone oxidoreductase that uses light energy to abstract electrons from H(2)O, generating O(2) and a proton gradient subsequently used for ATP formation. It consists of a core antenna complex that captures photons, and an electron transfer chain that converts photonic excitation into a charge separation. The D1/D2 (PsbA/PsbD) reaction center heterodimer binds P680, the primary electron donor of PSII as well as several subsequent electron acceptors. D2 is needed for assembly of a stable PSII complex. The polypeptide is Photosystem II D2 protein (Thermostichus vulcanus (Synechococcus vulcanus)).